The following is a 179-amino-acid chain: MSRIGKQPIPVPAGVDVTIEGQSISVKGPKGTLGLTVAEPIKVARNDDGAIVVTRPDDERRNRSLHGLSRTLVSNLVTGVTQGYTTKMEIFGVGYRVQLKGSNLEFALGYSHPVVIEAPEGITFAVQAPTKFTVSGIDKQKVGQIAANIRRLRRPDPYKGKGVRYEGEQIRRKVGKTGK.

This sequence belongs to the universal ribosomal protein uL6 family. As to quaternary structure, part of the 50S ribosomal subunit.

This protein binds to the 23S rRNA, and is important in its secondary structure. It is located near the subunit interface in the base of the L7/L12 stalk, and near the tRNA binding site of the peptidyltransferase center. The chain is Large ribosomal subunit protein uL6 from Mycobacterium tuberculosis (strain ATCC 25618 / H37Rv).